A 689-amino-acid polypeptide reads, in one-letter code: Glycine--tRNA ligase beta subunit (689 aa).

The protein belongs to the class-II aminoacyl-tRNA synthetase family. Tetramer of two alpha and two beta subunits.

It is found in the cytoplasm. The enzyme catalyses tRNA(Gly) + glycine + ATP = glycyl-tRNA(Gly) + AMP + diphosphate. The chain is Glycine--tRNA ligase beta subunit from Klebsiella pneumoniae subsp. pneumoniae (strain ATCC 700721 / MGH 78578).